Here is a 388-residue protein sequence, read N- to C-terminus: Protein TsgA homolog (388 aa).

Transmembrane regions (helical) follow at residues 11-31, 50-70, 77-97, 101-121, 133-153, 160-180, 206-226, 244-264, 268-288, 298-318, 332-352, and 360-380; these read WISF…GMIM, TFLN…IEII, IFSF…NSIF, INMF…TFII, LLLL…IVTA, IIWY…FLLT, VFLL…FISW, SLVS…SFII, NLYR…YCFI, YIII…ITLA, LILL…SPIV, and TLIS…LIYF.

The protein belongs to the major facilitator superfamily. TsgA family.

The protein resides in the cell membrane. In Buchnera aphidicola subsp. Acyrthosiphon pisum (strain Tuc7), this protein is Protein TsgA homolog.